The chain runs to 195 residues: Endoribonuclease YbeY (195 aa).

The Zn(2+) site is built by H152, H156, and H162.

It belongs to the endoribonuclease YbeY family. Zn(2+) is required as a cofactor.

Its subcellular location is the cytoplasm. In terms of biological role, single strand-specific metallo-endoribonuclease involved in late-stage 70S ribosome quality control and in maturation of the 3' terminus of the 16S rRNA. The chain is Endoribonuclease YbeY from Rhodopseudomonas palustris (strain HaA2).